Here is a 65-residue protein sequence, read N- to C-terminus: Large ribosomal subunit protein bL35 (65 aa).

Residues 1–51 (MPKMKTNRAAAKRFKKTANGGLKSANAYTSHRFHGKTKKQRRQLRGTDMMD) are disordered. Basic residues predominate over residues 31-44 (HRFHGKTKKQRRQL).

It belongs to the bacterial ribosomal protein bL35 family.

This Pediococcus pentosaceus (strain ATCC 25745 / CCUG 21536 / LMG 10740 / 183-1w) protein is Large ribosomal subunit protein bL35.